The primary structure comprises 252 residues: Imidazole glycerol phosphate synthase subunit HisF (252 aa).

Catalysis depends on residues Asp-11 and Asp-130.

Belongs to the HisA/HisF family. Heterodimer of HisH and HisF.

It localises to the cytoplasm. The catalysed reaction is 5-[(5-phospho-1-deoxy-D-ribulos-1-ylimino)methylamino]-1-(5-phospho-beta-D-ribosyl)imidazole-4-carboxamide + L-glutamine = D-erythro-1-(imidazol-4-yl)glycerol 3-phosphate + 5-amino-1-(5-phospho-beta-D-ribosyl)imidazole-4-carboxamide + L-glutamate + H(+). Its pathway is amino-acid biosynthesis; L-histidine biosynthesis; L-histidine from 5-phospho-alpha-D-ribose 1-diphosphate: step 5/9. In terms of biological role, IGPS catalyzes the conversion of PRFAR and glutamine to IGP, AICAR and glutamate. The HisF subunit catalyzes the cyclization activity that produces IGP and AICAR from PRFAR using the ammonia provided by the HisH subunit. This chain is Imidazole glycerol phosphate synthase subunit HisF, found in Azoarcus sp. (strain BH72).